Here is a 154-residue protein sequence, read N- to C-terminus: MTIAVAVKRLAHGAGLPLPDYATAGSAGLDLLAAVDAPVVIAPGARALVPTGLAIALPPDFELQVRPRSGLALKHGIVIPNSPGTIDSDYRGEIQVIVLNAGTEAFEVTRGMRIAQAVLAPVSRLVWQETDDLDRTAREAGGFGSTGLDFPMGN.

Substrate contacts are provided by residues 68-70 (RSG), asparagine 81, and 85-87 (TID).

This sequence belongs to the dUTPase family. Mg(2+) serves as cofactor.

It carries out the reaction dUTP + H2O = dUMP + diphosphate + H(+). It participates in pyrimidine metabolism; dUMP biosynthesis; dUMP from dCTP (dUTP route): step 2/2. This enzyme is involved in nucleotide metabolism: it produces dUMP, the immediate precursor of thymidine nucleotides and it decreases the intracellular concentration of dUTP so that uracil cannot be incorporated into DNA. This Acidiphilium cryptum (strain JF-5) protein is Deoxyuridine 5'-triphosphate nucleotidohydrolase.